Here is a 188-residue protein sequence, read N- to C-terminus: Small ribosomal subunit protein uS7 (188 aa).

Belongs to the universal ribosomal protein uS7 family. As to quaternary structure, part of the 30S ribosomal subunit.

One of the primary rRNA binding proteins, it binds directly to 16S rRNA where it nucleates assembly of the head domain of the 30S subunit. Is located at the subunit interface close to the decoding center. This is Small ribosomal subunit protein uS7 from Methanococcus maripaludis (strain C6 / ATCC BAA-1332).